The chain runs to 120 residues: Large ribosomal subunit protein uL18 (120 aa).

It belongs to the universal ribosomal protein uL18 family. Part of the 50S ribosomal subunit; part of the 5S rRNA/L5/L18/L25 subcomplex. Contacts the 5S and 23S rRNAs.

Its function is as follows. This is one of the proteins that bind and probably mediate the attachment of the 5S RNA into the large ribosomal subunit, where it forms part of the central protuberance. This is Large ribosomal subunit protein uL18 from Rhodospirillum centenum (strain ATCC 51521 / SW).